The following is a 367-amino-acid chain: tRNA-specific 2-thiouridylase MnmA (367 aa).

Residues glycine 13 to serine 20 and methionine 39 contribute to the ATP site. An interaction with target base in tRNA region spans residues asparagine 99–aspartate 101. The active-site Nucleophile is cysteine 104. A disulfide bond links cysteine 104 and cysteine 200. Residue glycine 128 participates in ATP binding. An interaction with tRNA region spans residues lysine 150 to glutamine 152. Cysteine 200 acts as the Cysteine persulfide intermediate in catalysis. The interval arginine 307–tyrosine 308 is interaction with tRNA.

The protein belongs to the MnmA/TRMU family.

The protein resides in the cytoplasm. The enzyme catalyses S-sulfanyl-L-cysteinyl-[protein] + uridine(34) in tRNA + AH2 + ATP = 2-thiouridine(34) in tRNA + L-cysteinyl-[protein] + A + AMP + diphosphate + H(+). Its function is as follows. Catalyzes the 2-thiolation of uridine at the wobble position (U34) of tRNA, leading to the formation of s(2)U34. The polypeptide is tRNA-specific 2-thiouridylase MnmA (Neisseria meningitidis serogroup B (strain ATCC BAA-335 / MC58)).